Here is a 222-residue protein sequence, read N- to C-terminus: Guanylate kinase (222 aa).

One can recognise a Guanylate kinase-like domain in the interval 19–197 (GFLFILSSPS…SVSLIKSIYL (179 aa)). 26 to 33 (SPSGAGKS) lines the ATP pocket.

Belongs to the guanylate kinase family.

Its subcellular location is the cytoplasm. It catalyses the reaction GMP + ATP = GDP + ADP. Its function is as follows. Essential for recycling GMP and indirectly, cGMP. The polypeptide is Guanylate kinase (Bartonella henselae (strain ATCC 49882 / DSM 28221 / CCUG 30454 / Houston 1) (Rochalimaea henselae)).